The primary structure comprises 115 residues: MAGAPTVSLPELRSLLASGRARLFDVRSREEAAAGTIPGALNIPVSELESALQMEPAAFQALYSAEKPKLEDEHLVFFCQMGKRGLQATQLARSLGYTGARNYAGAYREWLEKES.

The Rhodanese domain occupies A17–S115. C79 acts as the Cysteine persulfide intermediate in catalysis.

Highly expressed in kidney, liver and skeletal muscle. Lower levels of expression in heart, colon, thymus, spleen, placenta and lung. Weakly expressed in brain, small intestine and peripheral blood leukocytes. Expressed at high levels in the breast carcinoma cell lines MCF-7 and MDA-MB-468 and at a lower level in the breast carcinoma cell line MDA-MB-231, the colon carcinoma call line LoVo and the lung carcinoma cell line A-549. No expression in the cell lines EFO-27 and HeLa, or the normal breast tissue cell lines MCF-10A and H184A1. Detected in invasive ductal carcinoma, but not in the adjacent tissues.

It is found in the cytoplasm. The protein resides in the perinuclear region. The enzyme catalyses thiosulfate + glutathione = S-sulfanylglutathione + sulfite + H(+). It catalyses the reaction thiosulfate + 2 glutathione = glutathione disulfide + hydrogen sulfide + sulfite + 2 H(+). With respect to regulation, GSS(-) is a potent inhibitor of TSTD1, since the presence of the sulfur dioxygenase (SDO) strongly increases the TSTD1 catalytic activity. Its function is as follows. Thiosulfate:glutathione sulfurtransferase (TST) required to produce S-sulfanylglutathione (GSS(-)), a central intermediate in hydrogen sulfide metabolism. Provides the link between the first step in mammalian H(2)S metabolism performed by the sulfide:quinone oxidoreductase (SQOR) which catalyzes the conversion of H(2)S to thiosulfate, and the sulfur dioxygenase (SDO) which uses GSS(-) as substrate. The thermodynamic coupling of the irreversible SDO and reversible TST reactions provides a model for the physiologically relevant reaction with thiosulfate as the sulfane donor. GSS(-) spontaneously reacts with glutathione to form glutathione disulfide. The sequence is that of Thiosulfate:glutathione sulfurtransferase (TSTD1) from Homo sapiens (Human).